The following is a 396-amino-acid chain: Large ribosomal subunit protein uL24m (396 aa).

A disordered region spans residues Gln374–Val396. The span at Ala384 to Val396 shows a compositional bias: polar residues.

It belongs to the universal ribosomal protein uL24 family. Component of the mitochondrial large ribosomal subunit (mt-LSU). Mature N.crassa 74S mitochondrial ribosomes consist of a small (37S) and a large (54S) subunit. The 37S small subunit contains a 16S ribosomal RNA (16S mt-rRNA) and 32 different proteins. The 54S large subunit contains a 23S rRNA (23S mt-rRNA) and 42 different proteins. uL24m forms the wall of the exit tunnel.

It localises to the mitochondrion. Component of the mitochondrial ribosome (mitoribosome), a dedicated translation machinery responsible for the synthesis of mitochondrial genome-encoded proteins, including at least some of the essential transmembrane subunits of the mitochondrial respiratory chain. The mitoribosomes are attached to the mitochondrial inner membrane and translation products are cotranslationally integrated into the membrane. This Neurospora crassa (strain ATCC 24698 / 74-OR23-1A / CBS 708.71 / DSM 1257 / FGSC 987) protein is Large ribosomal subunit protein uL24m (mrpl40).